Reading from the N-terminus, the 893-residue chain is Translation initiation factor IF-2 (893 aa).

Disordered regions lie at residues 51-203 (KEHG…AEAE) and 216-300 (EENE…SMQH). 3 stretches are compositionally biased toward basic and acidic residues: residues 102–203 (ALEE…AEAE), 216–238 (EENE…DADY), and 245–261 (HARE…EQQP). Residues 392 to 561 (GRAPVVTIMG…LLQSEVLELT (170 aa)) form the tr-type G domain. The tract at residues 401–408 (GHVDHGKT) is G1. 401–408 (GHVDHGKT) is a binding site for GTP. The segment at 426 to 430 (GITQH) is G2. The tract at residues 447 to 450 (DTPG) is G3. GTP-binding positions include 447–451 (DTPGH) and 501–504 (NKID). The G4 stretch occupies residues 501–504 (NKID). The segment at 537 to 539 (SAK) is G5.

This sequence belongs to the TRAFAC class translation factor GTPase superfamily. Classic translation factor GTPase family. IF-2 subfamily.

The protein localises to the cytoplasm. Its function is as follows. One of the essential components for the initiation of protein synthesis. Protects formylmethionyl-tRNA from spontaneous hydrolysis and promotes its binding to the 30S ribosomal subunits. Also involved in the hydrolysis of GTP during the formation of the 70S ribosomal complex. The sequence is that of Translation initiation factor IF-2 from Aliivibrio fischeri (strain MJ11) (Vibrio fischeri).